Consider the following 217-residue polypeptide: Large ribosomal subunit protein bL21m (217 aa).

Positions 61–81 (PPKVTTATTPEAPAAVPTSTP) are enriched in low complexity. The segment at 61–87 (PPKVTTATTPEAPAAVPTSTPFSQQPP) is disordered.

It belongs to the bacterial ribosomal protein bL21 family. In terms of assembly, component of the mitochondrial large ribosomal subunit (mt-LSU). Mature N.crassa 74S mitochondrial ribosomes consist of a small (37S) and a large (54S) subunit. The 37S small subunit contains a 16S ribosomal RNA (16S mt-rRNA) and 32 different proteins. The 54S large subunit contains a 23S rRNA (23S mt-rRNA) and 42 different proteins.

Its subcellular location is the mitochondrion. Component of the mitochondrial ribosome (mitoribosome), a dedicated translation machinery responsible for the synthesis of mitochondrial genome-encoded proteins, including at least some of the essential transmembrane subunits of the mitochondrial respiratory chain. The mitoribosomes are attached to the mitochondrial inner membrane and translation products are cotranslationally integrated into the membrane. The chain is Large ribosomal subunit protein bL21m (mrpl49) from Neurospora crassa (strain ATCC 24698 / 74-OR23-1A / CBS 708.71 / DSM 1257 / FGSC 987).